The primary structure comprises 427 residues: Chaperone SurA (427 aa).

A signal peptide spans 1-13 (MLGVALLSGAVHA). PpiC domains are found at residues 164-265 (SEEY…KLEE) and 275-374 (RDEV…EVLG).

Its subcellular location is the periplasm. It catalyses the reaction [protein]-peptidylproline (omega=180) = [protein]-peptidylproline (omega=0). Its function is as follows. Chaperone involved in the correct folding and assembly of outer membrane proteins. Recognizes specific patterns of aromatic residues and the orientation of their side chains, which are found more frequently in integral outer membrane proteins. May act in both early periplasmic and late outer membrane-associated steps of protein maturation. This Pseudomonas putida (strain ATCC 47054 / DSM 6125 / CFBP 8728 / NCIMB 11950 / KT2440) protein is Chaperone SurA.